The primary structure comprises 733 residues: Acyl-coenzyme A oxidase (733 aa).

The protein belongs to the acyl-CoA oxidase family. FAD serves as cofactor.

The protein resides in the peroxisome. It catalyses the reaction a 2,3-saturated acyl-CoA + O2 = a (2E)-enoyl-CoA + H2O2. The protein operates within lipid metabolism; peroxisomal fatty acid beta-oxidation. In Eremothecium gossypii (strain ATCC 10895 / CBS 109.51 / FGSC 9923 / NRRL Y-1056) (Yeast), this protein is Acyl-coenzyme A oxidase (POX1).